The primary structure comprises 421 residues: UDP-N-acetylglucosamine 1-carboxyvinyltransferase (421 aa).

22 to 23 (KN) lines the phosphoenolpyruvate pocket. Arg93 is a UDP-N-acetyl-alpha-D-glucosamine binding site. Catalysis depends on Cys117, which acts as the Proton donor. A 2-(S-cysteinyl)pyruvic acid O-phosphothioketal modification is found at Cys117. UDP-N-acetyl-alpha-D-glucosamine-binding positions include 122–126 (RPVDL), Asp308, and Ile330.

It belongs to the EPSP synthase family. MurA subfamily.

The protein resides in the cytoplasm. It catalyses the reaction phosphoenolpyruvate + UDP-N-acetyl-alpha-D-glucosamine = UDP-N-acetyl-3-O-(1-carboxyvinyl)-alpha-D-glucosamine + phosphate. It participates in cell wall biogenesis; peptidoglycan biosynthesis. Functionally, cell wall formation. Adds enolpyruvyl to UDP-N-acetylglucosamine. The protein is UDP-N-acetylglucosamine 1-carboxyvinyltransferase of Pseudomonas putida (strain GB-1).